We begin with the raw amino-acid sequence, 254 residues long: MNSFGGRRRETAGPKGRRAHRPPQDQDRDVQLSKALSYALRHGALKLGLPMGADGFVPLDALLQLPQFRSFSAEDVQRVVDTNVKQRFALQPGDPSTGPLIRANQGHSLQVPELELEPLETPQALPLMLVHGTFRQHWPSILLKGLSCRGRTHIHLAPGLPGDPGVISGMRPNCEVAVFINGPLALADGIPFFRSTNGVILTPGNADGVLPPKYFKEALQLRPTRKPLSLAGNEEKEHQRDSKHSSRGRGMTQQ.

Methionine 1 carries the N-acetylmethionine modification. 2 disordered regions span residues methionine 1–valine 30 and arginine 225–glutamine 254. Residues asparagine 233 to histidine 244 show a composition bias toward basic and acidic residues.

Belongs to the KptA/TPT1 family.

The catalysed reaction is 2'-phospho-[ligated tRNA] + NAD(+) = mature tRNA + ADP-alpha-D-ribose 1'',2''-cyclic phosphate + nicotinamide. Functionally, catalyzes the last step of tRNA splicing, the transfer of the splice junction 2'-phosphate from ligated tRNA to NAD to produce ADP-ribose 1''-2'' cyclic phosphate. This Bos taurus (Bovine) protein is tRNA 2'-phosphotransferase 1 (TRPT1).